The following is a 436-amino-acid chain: UPF0597 protein YhaM (436 aa).

This sequence belongs to the UPF0597 family.

The protein is UPF0597 protein YhaM of Escherichia coli (strain SE11).